A 256-amino-acid polypeptide reads, in one-letter code: (R)-S-adenosyl-L-methionine hydrolase (256 aa).

Positions 7, 41, 68, and 183 each coordinate adenosine. (R)-S-adenosyl-L-methionine contacts are provided by Asn183, Tyr212, Ser226, Glu231, Val234, and Met236. Val234 contacts adenosine.

It belongs to the SAM hydrolase / SAM-dependent halogenase family. In terms of assembly, homotrimer.

The catalysed reaction is (R)-S-adenosyl-L-methionine + H2O = adenosine + L-methionine + H(+). In terms of biological role, catalyzes the hydrolysis of S-adenosyl-L-methionine (SAM) into adenosine and L-methionine. Is likely stereoselective, specifically hydrolyzing (R)-S-adenosyl-L-methionine ((R)-SAM), the inactive form of the ubiquitous cofactor SAM, and not the active form of SAM, (S)-S-adenosyl-L-methionine. Probaly plays a role in preventing accumulation of (R)-S-adenosyl-L-methionine in cells; maintenance of (S)-S-denosyl-L-methionine homochirality is important for cellular health given that the (R)-form is largely inactive as a methyl donor and can function as an inhibitor of methyltransferases. Is unable to mediate a fluorination or chlorination reaction with SAM. In Pyrococcus horikoshii (strain ATCC 700860 / DSM 12428 / JCM 9974 / NBRC 100139 / OT-3), this protein is (R)-S-adenosyl-L-methionine hydrolase.